We begin with the raw amino-acid sequence, 273 residues long: NH(3)-dependent NAD(+) synthetase (273 aa).

Residue glycine 46–serine 53 coordinates ATP. Aspartate 52 is a binding site for Mg(2+). Arginine 139 provides a ligand contact to deamido-NAD(+). Threonine 159 lines the ATP pocket. Residue glutamate 164 participates in Mg(2+) binding. Lysine 172 and aspartate 179 together coordinate deamido-NAD(+). 2 residues coordinate ATP: lysine 188 and threonine 210. Residue histidine 259–lysine 260 participates in deamido-NAD(+) binding.

It belongs to the NAD synthetase family. Homodimer.

The enzyme catalyses deamido-NAD(+) + NH4(+) + ATP = AMP + diphosphate + NAD(+) + H(+). It participates in cofactor biosynthesis; NAD(+) biosynthesis; NAD(+) from deamido-NAD(+) (ammonia route): step 1/1. In terms of biological role, catalyzes the ATP-dependent amidation of deamido-NAD to form NAD. Uses ammonia as a nitrogen source. The chain is NH(3)-dependent NAD(+) synthetase from Mycobacteroides abscessus (strain ATCC 19977 / DSM 44196 / CCUG 20993 / CIP 104536 / JCM 13569 / NCTC 13031 / TMC 1543 / L948) (Mycobacterium abscessus).